The chain runs to 79 residues: uncharacterized protein (79 aa).

Residues 1 to 24 (MNKFLNLIGLAFVLVLCAFSCSNA) form the signal peptide. One can recognise a LysM domain in the interval 32–78 (SWHVAQKGYTCYDMATSCKVTLDQFMRTNKLDNNACKLVQIGRKYCC).

It is found in the secreted. This is an uncharacterized protein from Dictyostelium discoideum (Social amoeba).